Here is a 231-residue protein sequence, read N- to C-terminus: Dephospho-CoA kinase (231 aa).

Positions Arg29 to Arg231 constitute a DPCK domain. Ala37 to Thr42 lines the ATP pocket.

Belongs to the CoaE family.

Its subcellular location is the cytoplasm. It carries out the reaction 3'-dephospho-CoA + ATP = ADP + CoA + H(+). Its pathway is cofactor biosynthesis; coenzyme A biosynthesis; CoA from (R)-pantothenate: step 5/5. Catalyzes the phosphorylation of the 3'-hydroxyl group of dephosphocoenzyme A to form coenzyme A. The chain is Dephospho-CoA kinase from Cutibacterium acnes (strain DSM 16379 / KPA171202) (Propionibacterium acnes).